The following is a 253-amino-acid chain: Imidazole glycerol phosphate synthase subunit HisF (253 aa).

Catalysis depends on residues D11 and D130.

The protein belongs to the HisA/HisF family. As to quaternary structure, heterodimer of HisH and HisF.

It localises to the cytoplasm. The enzyme catalyses 5-[(5-phospho-1-deoxy-D-ribulos-1-ylimino)methylamino]-1-(5-phospho-beta-D-ribosyl)imidazole-4-carboxamide + L-glutamine = D-erythro-1-(imidazol-4-yl)glycerol 3-phosphate + 5-amino-1-(5-phospho-beta-D-ribosyl)imidazole-4-carboxamide + L-glutamate + H(+). It participates in amino-acid biosynthesis; L-histidine biosynthesis; L-histidine from 5-phospho-alpha-D-ribose 1-diphosphate: step 5/9. In terms of biological role, IGPS catalyzes the conversion of PRFAR and glutamine to IGP, AICAR and glutamate. The HisF subunit catalyzes the cyclization activity that produces IGP and AICAR from PRFAR using the ammonia provided by the HisH subunit. The chain is Imidazole glycerol phosphate synthase subunit HisF from Desulfitobacterium hafniense (strain DSM 10664 / DCB-2).